A 269-amino-acid chain; its full sequence is MQAYLDLIDKILREGVRKPDRTGTGTLSIFGYQMRFDLGAGFPLVTTKKLHWKSIVHELIWFLRGDTNIGYLKDNGVGIWDEWADDSGDLGPVYGRQWRSWQAPDGRTIDQIANVIDEIQRDPFSRRLLVSAWNPADLPAMALAPCHCLFQFNVRDDSTGTRRLDLQLYQRSGDAFLGAPFNIASYALLTELVASVCGLTPGDFVHTFGDAHLYLNHIDQAKLQLSRDPRPLPRLRINGNVKSLFDIRFEDLSLENYDPHPVIKAPVAV.

Position 21 (R21) interacts with dUMP. Residue H51 participates in (6R)-5,10-methylene-5,6,7,8-tetrahydrofolate binding. 126–127 (RR) is a dUMP binding site. C146 serves as the catalytic Nucleophile. DUMP contacts are provided by residues 171–174 (RSGD), N182, and 212–214 (HLY). D174 contacts (6R)-5,10-methylene-5,6,7,8-tetrahydrofolate. Position 268 (A268) interacts with (6R)-5,10-methylene-5,6,7,8-tetrahydrofolate.

This sequence belongs to the thymidylate synthase family. Bacterial-type ThyA subfamily. As to quaternary structure, homodimer.

The protein resides in the cytoplasm. It catalyses the reaction dUMP + (6R)-5,10-methylene-5,6,7,8-tetrahydrofolate = 7,8-dihydrofolate + dTMP. It functions in the pathway pyrimidine metabolism; dTTP biosynthesis. Catalyzes the reductive methylation of 2'-deoxyuridine-5'-monophosphate (dUMP) to 2'-deoxythymidine-5'-monophosphate (dTMP) while utilizing 5,10-methylenetetrahydrofolate (mTHF) as the methyl donor and reductant in the reaction, yielding dihydrofolate (DHF) as a by-product. This enzymatic reaction provides an intracellular de novo source of dTMP, an essential precursor for DNA biosynthesis. This Methylocella silvestris (strain DSM 15510 / CIP 108128 / LMG 27833 / NCIMB 13906 / BL2) protein is Thymidylate synthase.